Reading from the N-terminus, the 168-residue chain is Photosystem I assembly protein Ycf3 (168 aa).

3 TPR repeats span residues 35 to 68 (AFTY…EIDP), 72 to 105 (SYIL…NPFL), and 120 to 153 (GEQA…TPGN).

The protein belongs to the Ycf3 family.

It is found in the plastid. The protein resides in the chloroplast thylakoid membrane. In terms of biological role, essential for the assembly of the photosystem I (PSI) complex. May act as a chaperone-like factor to guide the assembly of the PSI subunits. In Populus alba (White poplar), this protein is Photosystem I assembly protein Ycf3.